Here is a 2412-residue protein sequence, read N- to C-terminus: Genome polyprotein 1 (2412 aa).

The disordered stretch occupies residues 1 to 23 (MEQTLAQAVSRRGKTNTPMAEER). The Helicase ATP-binding domain occupies 474–632 (AMADANNCWS…AARKYPLHVE (159 aa)). ATP is bound at residue 487–494 (GHTGSGKS). Residues 647 to 813 (GGGDLLDISK…NVPFYMNETF (167 aa)) form the Helicase C-terminal domain. Tyr-1234 carries the O-(5'-phospho-RNA)-tyrosine modification. The 216-residue stretch at 1359–1574 (ISFGASTGIL…CGYSSHNALF (216 aa)) folds into the Peptidase C4 domain. Active-site for nuclear inclusion protein A activity residues include His-1404, Asp-1440, and Cys-1507. The RdRp catalytic domain maps to 1858-1982 (WLHGSGDGSR…AISPQFDEEF (125 aa)). A disordered region spans residues 2178–2202 (PTEDDGKLKTPSGARIPSSAADGNW).

The protein belongs to the bymoviruses polyprotein 1 family. In terms of processing, VPg is uridylylated by the polymerase and is covalently attached to the 5'-end of the genomic RNA. This uridylylated form acts as a nucleotide-peptide primer for the polymerase. The viral RNA1 of bymoviruses is expressed as a single polyprotein which undergoes post-translational proteolytic processing by the main proteinase NIa-pro resulting in the production of at least eight individual proteins.

The protein localises to the host cytoplasmic vesicle. It is found in the virion. It carries out the reaction RNA(n) + a ribonucleoside 5'-triphosphate = RNA(n+1) + diphosphate. It catalyses the reaction Hydrolyzes glutaminyl bonds, and activity is further restricted by preferences for the amino acids in P6 - P1' that vary with the species of potyvirus, e.g. Glu-Xaa-Xaa-Tyr-Xaa-Gln-|-(Ser or Gly) for the enzyme from tobacco etch virus. The natural substrate is the viral polyprotein, but other proteins and oligopeptides containing the appropriate consensus sequence are also cleaved.. Functionally, indispensable for virus replication. Mediates the cap-independent, EIF4E-dependent translation of viral genomic RNAs. Binds to the cap-binding site of host EIF4E and thus interferes with the host EIF4E-dependent mRNA export and translation. VPg-RNA directly binds EIF4E and is a template for transcription. Also forms trimeric complexes with EIF4E-EIF4G, which are templates for translation. In terms of biological role, has RNA-binding and proteolytic activities. Its function is as follows. An RNA-dependent RNA polymerase that plays an essential role in the virus replication. The protein is Genome polyprotein 1 of Hordeum vulgare (Barley).